The following is a 132-amino-acid chain: MSNDIISNMITSIRNAILSKTKTVDILATTTTRSIAKILLQEGFIDGLRERQENGRRLLLLTLHYERKNKSKITTSLRRISKPGLRVYSNHQEIPKVLGGIGIVILSTSKGIMVDREARHKKIGGEIICYVS.

Belongs to the universal ribosomal protein uS8 family. As to quaternary structure, part of the 30S ribosomal subunit.

The protein resides in the plastid. It localises to the chloroplast. Its function is as follows. One of the primary rRNA binding proteins, it binds directly to 16S rRNA central domain where it helps coordinate assembly of the platform of the 30S subunit. The chain is Small ribosomal subunit protein uS8c (rps8) from Spirogyra maxima (Green alga).